The primary structure comprises 911 residues: Protein transport protein SEC24-1 (911 aa).

The span at 108–123 (QPLPQQQQQQQQQQGP) shows a compositional bias: low complexity. Residues 108–130 (QPLPQQQQQQQQQQGPAKPPKPM) are disordered. Residues Cys226, Cys229, Cys248, and Cys251 each coordinate Zn(2+). The tract at residues 226-251 (CRRCRSYMNPFVHFNQDGRRWKCNIC) is zinc finger-like.

It belongs to the SEC23/SEC24 family. SEC24 subfamily. As to quaternary structure, the COPII coat is composed of at least 5 proteins: the SEC23/24 complex, the SEC13/31 complex, and the protein SAR1. Golgi apparatus membrane; Peripheral membrane protein; Cytoplasmic side.

Its subcellular location is the cytoplasm. The protein resides in the cytoplasmic vesicle. The protein localises to the COPII-coated vesicle membrane. It is found in the endoplasmic reticulum membrane. It localises to the golgi apparatus membrane. Its function is as follows. Component of the coat protein complex II (COPII) which promotes the formation of transport vesicles from the endoplasmic reticulum (ER). The coat has two main functions, the physical deformation of the endoplasmic reticulum membrane into vesicles and the selection of cargo molecules. The polypeptide is Protein transport protein SEC24-1 (SEC241) (Naumovozyma castellii (Yeast)).